The primary structure comprises 205 residues: MAAARPILGRVLPGSSILFLCDMQEKFRHNIAYFPQIVSVAARMLRVARLLEVPVLLTEQYPQGLGPTVPELGAEGLQPLTKTCFSMVPALQQELDSRPQLRSVLLCGIEAQACILNTTLDLLDRGLQVHVVVDACSSRSQVDRLVALARMRQSGAFLSTSEGLILQLVGDAAHPQFKEIQKLIKEPAPDSGLLGLFQGQNPLLH.

This sequence belongs to the isochorismatase family. As to quaternary structure, interacts with CDKN2A.

Its subcellular location is the cytoplasm. The protein resides in the nucleus. In Macaca fascicularis (Crab-eating macaque), this protein is Isochorismatase domain-containing protein 2 (ISOC2).